Reading from the N-terminus, the 289-residue chain is 4-hydroxybenzoate octaprenyltransferase (289 aa).

9 helical membrane-spanning segments follow: residues Ile-19–Leu-39, Ile-42–Ile-62, Gly-85–Ile-105, Val-107–Leu-127, Phe-134–Phe-154, Ala-165–Leu-185, Ile-211–Phe-231, Ser-233–Tyr-253, and Phe-265–Ile-285.

The protein belongs to the UbiA prenyltransferase family. The cofactor is Mg(2+).

It is found in the cell inner membrane. The catalysed reaction is all-trans-octaprenyl diphosphate + 4-hydroxybenzoate = 4-hydroxy-3-(all-trans-octaprenyl)benzoate + diphosphate. Its pathway is cofactor biosynthesis; ubiquinone biosynthesis. Functionally, catalyzes the prenylation of para-hydroxybenzoate (PHB) with an all-trans polyprenyl group. Mediates the second step in the final reaction sequence of ubiquinone-8 (UQ-8) biosynthesis, which is the condensation of the polyisoprenoid side chain with PHB, generating the first membrane-bound Q intermediate 3-octaprenyl-4-hydroxybenzoate. This is 4-hydroxybenzoate octaprenyltransferase from Francisella tularensis subsp. holarctica (strain FTNF002-00 / FTA).